Here is a 209-residue protein sequence, read N- to C-terminus: Ribosomal RNA small subunit methyltransferase G (209 aa).

S-adenosyl-L-methionine-binding positions include Gly71, Phe76, Ala122–Glu123, and Arg135.

It belongs to the methyltransferase superfamily. RNA methyltransferase RsmG family.

It is found in the cytoplasm. In terms of biological role, specifically methylates the N7 position of a guanine in 16S rRNA. The protein is Ribosomal RNA small subunit methyltransferase G of Flavobacterium psychrophilum (strain ATCC 49511 / DSM 21280 / CIP 103535 / JIP02/86).